Consider the following 191-residue polypeptide: MFSAQHKIHKEKGVELSELDEQVAQAFFDLENTNQELKSELKDLYVNSAVQVDISGGRKAIVVNVPYRLRKAYRKIHVRLVRELEKKFSGKDVILIATRRIVRPPKKGSAAKRPRNRTLTSVHEAILDDVVLPAEIVGKRTRYRLDGTKIMKVFLDPKERNNTEYKVEAFSAVYKKLTGKDVVFEFPITEA.

Position 1 is an N-acetylmethionine (M1). Positions 15 to 50 form a coiled coil; sequence ELSELDEQVAQAFFDLENTNQELKSELKDLYVNSAV.

Belongs to the eukaryotic ribosomal protein eS7 family.

This is Small ribosomal subunit protein eS7z (RPS7A) from Arabidopsis thaliana (Mouse-ear cress).